Consider the following 188-residue polypeptide: dCTP deaminase (188 aa).

DCTP contacts are provided by residues 111–116 (KSTYAR), 135–137 (TLE), glutamine 156, tyrosine 170, lysine 179, and glutamine 180. Glutamate 137 functions as the Proton donor/acceptor in the catalytic mechanism.

It belongs to the dCTP deaminase family. Homotrimer.

It catalyses the reaction dCTP + H2O + H(+) = dUTP + NH4(+). Its pathway is pyrimidine metabolism; dUMP biosynthesis; dUMP from dCTP (dUTP route): step 1/2. Functionally, catalyzes the deamination of dCTP to dUTP. The protein is dCTP deaminase of Rickettsia typhi (strain ATCC VR-144 / Wilmington).